The sequence spans 161 residues: Large ribosomal subunit protein bL17 (161 aa).

The disordered stretch occupies residues 126–161 (TAAKKAPKTRRSRKKATASVAEAPTAEAASEEKAAE). The span at 130 to 141 (KAPKTRRSRKKA) shows a compositional bias: basic residues. Positions 142 to 153 (TASVAEAPTAEA) are enriched in low complexity.

This sequence belongs to the bacterial ribosomal protein bL17 family. In terms of assembly, part of the 50S ribosomal subunit. Contacts protein L32.

The polypeptide is Large ribosomal subunit protein bL17 (Parabacteroides distasonis (strain ATCC 8503 / DSM 20701 / CIP 104284 / JCM 5825 / NCTC 11152)).